Reading from the N-terminus, the 159-residue chain is Ribosomal RNA large subunit methyltransferase H (159 aa).

S-adenosyl-L-methionine-binding positions include Leu76, Gly108, and 127–132; that span reads FGKLTL.

This sequence belongs to the RNA methyltransferase RlmH family. Homodimer.

Its subcellular location is the cytoplasm. The catalysed reaction is pseudouridine(1915) in 23S rRNA + S-adenosyl-L-methionine = N(3)-methylpseudouridine(1915) in 23S rRNA + S-adenosyl-L-homocysteine + H(+). In terms of biological role, specifically methylates the pseudouridine at position 1915 (m3Psi1915) in 23S rRNA. The chain is Ribosomal RNA large subunit methyltransferase H from Streptococcus sanguinis (strain SK36).